A 249-amino-acid chain; its full sequence is Triosephosphate isomerase (249 aa).

Substrate is bound at residue 9–11 (NWK). His94 serves as the catalytic Electrophile. The active-site Proton acceptor is the Glu166. Substrate-binding positions include Gly172, Ser211, and 232–233 (GG).

It belongs to the triosephosphate isomerase family. In terms of assembly, homodimer.

The protein localises to the cytoplasm. It catalyses the reaction D-glyceraldehyde 3-phosphate = dihydroxyacetone phosphate. It functions in the pathway carbohydrate biosynthesis; gluconeogenesis. It participates in carbohydrate degradation; glycolysis; D-glyceraldehyde 3-phosphate from glycerone phosphate: step 1/1. Functionally, involved in the gluconeogenesis. Catalyzes stereospecifically the conversion of dihydroxyacetone phosphate (DHAP) to D-glyceraldehyde-3-phosphate (G3P). The polypeptide is Triosephosphate isomerase (Moorella thermoacetica (strain ATCC 39073 / JCM 9320)).